The sequence spans 235 residues: tRNA (guanine-N(1)-)-methyltransferase (235 aa).

Residues G114 and 134–139 (IGDYIL) each bind S-adenosyl-L-methionine.

The protein belongs to the RNA methyltransferase TrmD family. Homodimer.

The protein localises to the cytoplasm. The catalysed reaction is guanosine(37) in tRNA + S-adenosyl-L-methionine = N(1)-methylguanosine(37) in tRNA + S-adenosyl-L-homocysteine + H(+). Functionally, specifically methylates guanosine-37 in various tRNAs. The sequence is that of tRNA (guanine-N(1)-)-methyltransferase from Ehrlichia ruminantium (strain Welgevonden).